Here is a 256-residue protein sequence, read N- to C-terminus: DNA repair protein RecO (256 aa).

It belongs to the RecO family.

Its function is as follows. Involved in DNA repair and RecF pathway recombination. In Nocardia farcinica (strain IFM 10152), this protein is DNA repair protein RecO.